A 299-amino-acid chain; its full sequence is Secreted LysM effector ldpB (299 aa).

Positions 1-19 (MGLTSILIAQVLFLGAANS) are cleaved as a signal peptide. 3 consecutive LysM domains span residues 46–91 (WVND…SYCV), 135–182 (AFYK…YVCI), and 211–258 (KYHK…YVCV). Asn-154 carries an N-linked (GlcNAc...) asparagine glycan. The span at 266–283 (ATATPQPTPQPQQSSSPD) shows a compositional bias: low complexity. The disordered stretch occupies residues 266 to 288 (ATATPQPTPQPQQSSSPDQPMPQ).

Belongs to the secreted LysM effector family.

The protein localises to the secreted. Its subcellular location is the cell wall. The protein resides in the extracellular space. It localises to the extracellular matrix. Cell wall chitin of A.fumigatus recruits lung eosinophils during infection and ldpB might have a role in sequestration of chitin and act as triggers of host immunity to dampen host defense. The sequence is that of Secreted LysM effector ldpB from Aspergillus fumigatus (strain ATCC MYA-4609 / CBS 101355 / FGSC A1100 / Af293) (Neosartorya fumigata).